A 137-amino-acid chain; its full sequence is Fluoride-specific ion channel FluC (137 aa).

Transmembrane regions (helical) follow at residues 11–31 (IAVSLGAIAGALSRYYLSLWF), 42–62 (GTLFINITGCLAMGFFYALAL), 75–95 (LIAVGFLGAYTTFSTYALDTF), and 107–127 (GFYWAGSTILGVISIQIGIIL). Residues G82 and T85 each contribute to the Na(+) site.

Belongs to the fluoride channel Fluc/FEX (TC 1.A.43) family.

The protein resides in the cell inner membrane. The catalysed reaction is fluoride(in) = fluoride(out). Its activity is regulated as follows. Na(+) is not transported, but it plays an essential structural role and its presence is essential for fluoride channel function. Its function is as follows. Fluoride-specific ion channel. Important for reducing fluoride concentration in the cell, thus reducing its toxicity. The sequence is that of Fluoride-specific ion channel FluC from Trichormus variabilis (strain ATCC 29413 / PCC 7937) (Anabaena variabilis).